The primary structure comprises 162 residues: Crossover junction endodeoxyribonuclease RuvC (162 aa).

Active-site residues include D7, E67, and D140. Positions 7, 67, and 140 each coordinate Mg(2+).

Belongs to the RuvC family. In terms of assembly, homodimer which binds Holliday junction (HJ) DNA. The HJ becomes 2-fold symmetrical on binding to RuvC with unstacked arms; it has a different conformation from HJ DNA in complex with RuvA. In the full resolvosome a probable DNA-RuvA(4)-RuvB(12)-RuvC(2) complex forms which resolves the HJ. Requires Mg(2+) as cofactor.

It localises to the cytoplasm. The catalysed reaction is Endonucleolytic cleavage at a junction such as a reciprocal single-stranded crossover between two homologous DNA duplexes (Holliday junction).. The RuvA-RuvB-RuvC complex processes Holliday junction (HJ) DNA during genetic recombination and DNA repair. Endonuclease that resolves HJ intermediates. Cleaves cruciform DNA by making single-stranded nicks across the HJ at symmetrical positions within the homologous arms, yielding a 5'-phosphate and a 3'-hydroxyl group; requires a central core of homology in the junction. The consensus cleavage sequence is 5'-(A/T)TT(C/G)-3'. Cleavage occurs on the 3'-side of the TT dinucleotide at the point of strand exchange. HJ branch migration catalyzed by RuvA-RuvB allows RuvC to scan DNA until it finds its consensus sequence, where it cleaves and resolves the cruciform DNA. In Pseudothermotoga lettingae (strain ATCC BAA-301 / DSM 14385 / NBRC 107922 / TMO) (Thermotoga lettingae), this protein is Crossover junction endodeoxyribonuclease RuvC.